Here is a 274-residue protein sequence, read N- to C-terminus: ATP synthase subunit delta (274 aa).

The protein belongs to the ATPase delta chain family. In terms of assembly, F-type ATPases have 2 components, F(1) - the catalytic core - and F(0) - the membrane proton channel. F(1) has five subunits: alpha(3), beta(3), gamma(1), delta(1), epsilon(1). F(0) has three main subunits: a(1), b(2) and c(10-14). The alpha and beta chains form an alternating ring which encloses part of the gamma chain. F(1) is attached to F(0) by a central stalk formed by the gamma and epsilon chains, while a peripheral stalk is formed by the delta and b chains.

It is found in the cell membrane. Functionally, f(1)F(0) ATP synthase produces ATP from ADP in the presence of a proton or sodium gradient. F-type ATPases consist of two structural domains, F(1) containing the extramembraneous catalytic core and F(0) containing the membrane proton channel, linked together by a central stalk and a peripheral stalk. During catalysis, ATP synthesis in the catalytic domain of F(1) is coupled via a rotary mechanism of the central stalk subunits to proton translocation. This protein is part of the stalk that links CF(0) to CF(1). It either transmits conformational changes from CF(0) to CF(1) or is implicated in proton conduction. This is ATP synthase subunit delta from Salinispora tropica (strain ATCC BAA-916 / DSM 44818 / JCM 13857 / NBRC 105044 / CNB-440).